We begin with the raw amino-acid sequence, 199 residues long: Pathogenesis-related 5 protein Cup a 3 (199 aa).

Cystine bridges form between Cys9–Cys198, Cys50–Cys60, Cys65–Cys71, Cys113–Cys187, Cys118–Cys171, Cys126–Cys136, Cys140–Cys149, and Cys150–Cys158.

Belongs to the thaumatin family. As to expression, expressed in pollen.

It is found in the secreted. Its subcellular location is the extracellular space. The protein localises to the extracellular matrix. It localises to the pollen coat. The protein resides in the cytoplasm. It is found in the nucleus. Its subcellular location is the mitochondrion. The protein localises to the endoplasmic reticulum. It localises to the golgi apparatus. The protein resides in the golgi stack. It is found in the vesicle. Its subcellular location is the vacuole. This chain is Pathogenesis-related 5 protein Cup a 3, found in Hesperocyparis arizonica (Arizona cypress).